The primary structure comprises 93 residues: YcgL domain-containing protein VFMJ11_1829 (93 aa).

The region spanning methionine 1–lysine 84 is the YcgL domain.

The sequence is that of YcgL domain-containing protein VFMJ11_1829 from Aliivibrio fischeri (strain MJ11) (Vibrio fischeri).